We begin with the raw amino-acid sequence, 129 residues long: Small ribosomal subunit protein uS9 (129 aa).

The protein belongs to the universal ribosomal protein uS9 family.

The protein is Small ribosomal subunit protein uS9 of Chlorobium luteolum (strain DSM 273 / BCRC 81028 / 2530) (Pelodictyon luteolum).